Consider the following 255-residue polypeptide: Flap endonuclease Xni (255 aa).

Mg(2+) is bound at residue Asp105. The 5'-3' exonuclease domain occupies 163 to 253 (QYQMLDFIAL…NLKQFRINPI (91 aa)). K(+)-binding residues include Leu172, Ala173, Pro181, Ile183, and Ile186. The tract at residues 185 to 190 (GIGPKS) is interaction with DNA.

The protein belongs to the Xni family. Mg(2+) serves as cofactor. It depends on K(+) as a cofactor.

Its function is as follows. Has flap endonuclease activity. During DNA replication, flap endonucleases cleave the 5'-overhanging flap structure that is generated by displacement synthesis when DNA polymerase encounters the 5'-end of a downstream Okazaki fragment. This chain is Flap endonuclease Xni, found in Shewanella frigidimarina (strain NCIMB 400).